Here is a 292-residue protein sequence, read N- to C-terminus: Ribosomal protein L11 methyltransferase (292 aa).

S-adenosyl-L-methionine is bound by residues T144, G165, D187, and N229.

It belongs to the methyltransferase superfamily. PrmA family.

The protein resides in the cytoplasm. The enzyme catalyses L-lysyl-[protein] + 3 S-adenosyl-L-methionine = N(6),N(6),N(6)-trimethyl-L-lysyl-[protein] + 3 S-adenosyl-L-homocysteine + 3 H(+). Methylates ribosomal protein L11. This is Ribosomal protein L11 methyltransferase from Saccharophagus degradans (strain 2-40 / ATCC 43961 / DSM 17024).